Reading from the N-terminus, the 191-residue chain is Cell division protein SepF (191 aa).

A disordered region spans residues 21-96; sequence EVEEPAVASV…NQQPAQEKTT (76 aa). Residues 25-56 are compositionally biased toward low complexity; the sequence is PAVASVKRQQDAAQPASQQQKAQSHQYHQSAS. Composition is skewed to polar residues over residues 57-69 and 86-95; these read RPSQ…GQNR and HNQQPAQEKT.

It belongs to the SepF family. In terms of assembly, homodimer. Interacts with FtsZ.

The protein resides in the cytoplasm. Cell division protein that is part of the divisome complex and is recruited early to the Z-ring. Probably stimulates Z-ring formation, perhaps through the cross-linking of FtsZ protofilaments. Its function overlaps with FtsA. This is Cell division protein SepF from Streptococcus mutans serotype c (strain ATCC 700610 / UA159).